The chain runs to 80 residues: Transcription elongation factor 1 homolog (80 aa).

4 residues coordinate Zn(2+): Cys-25, Cys-28, Cys-49, and Cys-52.

The protein belongs to the ELOF1 family.

The protein localises to the nucleus. In terms of biological role, transcription elongation factor implicated in the maintenance of proper chromatin structure in actively transcribed regions. The sequence is that of Transcription elongation factor 1 homolog from Encephalitozoon cuniculi (strain GB-M1) (Microsporidian parasite).